A 531-amino-acid chain; its full sequence is Beta-hexosaminidase subunit beta (531 aa).

An N-terminal signal peptide occupies residues 1-21 (MEVLPGLLRLLAALVVAERWA). A disulfide bridge links cysteine 67 with cysteine 111. 3 N-linked (GlcNAc...) asparagine glycosylation sites follow: asparagine 120, asparagine 164, and asparagine 301. 2 cysteine pairs are disulfide-bonded: cysteine 283–cysteine 334 and cysteine 508–cysteine 525. The active-site Proton donor is glutamate 329.

It belongs to the glycosyl hydrolase 20 family. In terms of assembly, there are 3 forms of beta-hexosaminidase: hexosaminidase A is a heterodimer composed of one subunit alpha and one subunit beta (chain A and B); hexosaminidase B is a homodimer of two beta subunits (two chains A and B); hexosaminidase S is a homodimer of two alpha subunits. The composition of the dimer (isozyme A versus isozyme S) has a significant effect on the substrate specificity of the alpha subunit active site.

It is found in the lysosome. The protein localises to the cytoplasmic vesicle. The protein resides in the secretory vesicle. It localises to the cortical granule. The catalysed reaction is Hydrolysis of terminal non-reducing N-acetyl-D-hexosamine residues in N-acetyl-beta-D-hexosaminides.. It catalyses the reaction N-acetyl-beta-D-galactosaminyl-(1-&gt;4)-beta-D-3-sulfogalactosyl-(1-&gt;4)-beta-D-glucosyl-(1&lt;-&gt;1')-ceramide + H2O = a beta-D-3-sulfogalactosyl-(1-&gt;4)-beta-D-glucosyl-(1&lt;-&gt;1')-ceramide + N-acetyl-beta-D-galactosamine. It carries out the reaction a ganglioside GM2 (d18:1(4E)) + H2O = a ganglioside GM3 (d18:1(4E)) + N-acetyl-beta-D-galactosamine. The enzyme catalyses a ganglioside GM2 + H2O = a ganglioside GM3 + N-acetyl-beta-D-galactosamine. The catalysed reaction is beta-D-GalNAc-(1-&gt;4)-alpha-L-IdoA-(1-&gt;3)-beta-D-GalNAc-4-sulfate-(1-&gt;4)-alpha-L-IdoA-(1-&gt;3)-D-GalNAc-4-sulfate + H2O = alpha-L-IdoA-(1-&gt;3)-beta-D-GalNAc-4-sulfate-(1-&gt;4)-alpha-L-IdoA-(1-&gt;3)-D-GalNAc-4-sulfate + N-acetyl-D-galactosamine. It catalyses the reaction N-acetyl-beta-D-6-sulfogalactosaminyl-(1-&gt;4)-alpha-L-iduronyl-(1-&gt;3)-N-acetyl-D-6-sulfogalactosamine + H2O = alpha-L-iduronyl-(1-&gt;3)-N-acetyl-D-6-sulfogalactosamine + N-acetyl-D-6-sulfogalactosamine. With respect to regulation, addition of GM2A stimulates the hydrolysis of sulfated glycosphingolipid SM2 and the ganglioside GM2. In terms of biological role, hydrolyzes the non-reducing end N-acetyl-D-hexosamine and/or sulfated N-acetyl-D-hexosamine of glycoconjugates, such as the oligosaccharide moieties from proteins and neutral glycolipids, or from certain mucopolysaccharides. The isozyme B does not hydrolyze each of these substrates, however hydrolyzes efficiently neutral oligosaccharide. Only the isozyme A is responsible for the degradation of GM2 gangliosides in the presence of GM2A. During fertilization is responsible, at least in part, for the zona block to polyspermy. Present in the cortical granules of non-activated oocytes, is exocytosed during the cortical reaction in response to oocyte activation and inactivates the sperm galactosyltransferase-binding site, accounting for the block in sperm binding to the zona pellucida. This is Beta-hexosaminidase subunit beta from Sus scrofa (Pig).